A 560-amino-acid chain; its full sequence is Nucleoprotein (560 aa).

The segment at 54-236 is binding site for the cap structure m7GTP; it reads LRKSKRGDTD…ITKDESALNI (183 aa). Positions 380 and 382 each coordinate Mn(2+). Zn(2+) contacts are provided by Glu390, Cys497, His500, and Cys521. Asp525 lines the Mn(2+) pocket.

The protein belongs to the arenaviridae nucleocapsid protein family. As to quaternary structure, homomultimerizes to form the nucleocapsid. Binds to viral genomic RNA. Interacts with glycoprotein G2. Interacts with protein Z; this interaction probably directs the encapsidated genome to budding sites. Interacts with protein L; this interaction does not interfere with Z-L interaction. Interacts with host IKBKE (via Protein kinase domain); the interaction inhibits IKBKE kinase activity.

It is found in the virion. It localises to the host cytoplasm. Its function is as follows. Encapsidates the genome, protecting it from nucleases. The encapsidated genomic RNA is termed the nucleocapsid (NC). Serves as template for viral transcription and replication. The increased presence of protein N in host cell does not seem to trigger the switch from transcription to replication as observed in other negative strain RNA viruses. Through the interaction with host IKBKE, strongly inhibits the phosphorylation and nuclear translocation of host IRF3, a protein involved in interferon activation pathway, leading to the inhibition of interferon-beta and IRF3-dependent promoters activation. Also encodes a functional 3'-5' exoribonuclease that degrades preferentially dsRNA substrates and thereby participates in the suppression of interferon induction. The protein is Nucleoprotein of Homo sapiens (Human).